The chain runs to 1274 residues: Meiosis inhibitor protein 1 (1274 aa).

Expressed predominantly in testis. Weakly expressed in spleen and thymus. Expressed in the ovaries, Fallopian tubes and uterus.

Required for normal meiotic chromosome synapsis. May be involved in the formation of meiotic double-strand breaks (DSBs) in spermatocytes. In Homo sapiens (Human), this protein is Meiosis inhibitor protein 1.